A 379-amino-acid polypeptide reads, in one-letter code: Cytochrome b (379 aa).

The next 4 membrane-spanning stretches (helical) occupy residues 33–53, 77–98, 113–133, and 178–198; these read FGSL…FLAM, WTIR…FIHV, WNVG…GYVL, and FFAL…IHLL. His-83 and His-97 together coordinate heme b. Heme b-binding residues include His-182 and His-196. His-201 provides a ligand contact to a ubiquinone. Helical transmembrane passes span 226-246, 288-308, 320-340, and 347-367; these read TKDF…ALFY, LGGV…PFLQ, LSQF…WIGG, and FINI…FIMP.

Belongs to the cytochrome b family. As to quaternary structure, the cytochrome bc1 complex contains 11 subunits: 3 respiratory subunits (MT-CYB, CYC1 and UQCRFS1), 2 core proteins (UQCRC1 and UQCRC2) and 6 low-molecular weight proteins (UQCRH/QCR6, UQCRB/QCR7, UQCRQ/QCR8, UQCR10/QCR9, UQCR11/QCR10 and a cleavage product of UQCRFS1). This cytochrome bc1 complex then forms a dimer. Heme b is required as a cofactor.

The protein localises to the mitochondrion inner membrane. Component of the ubiquinol-cytochrome c reductase complex (complex III or cytochrome b-c1 complex) that is part of the mitochondrial respiratory chain. The b-c1 complex mediates electron transfer from ubiquinol to cytochrome c. Contributes to the generation of a proton gradient across the mitochondrial membrane that is then used for ATP synthesis. In Lepilemur dorsalis (Grey-backed sportive lemur), this protein is Cytochrome b (MT-CYB).